Here is a 161-residue protein sequence, read N- to C-terminus: Putative 2'-deoxynucleoside 5'-phosphate N-hydrolase 1 (161 aa).

Substrate contacts are provided by residues 27–33, tyrosine 42, histidine 60, glutamate 106, and 128–130; these read FLSGSIR and SSM.

This sequence belongs to the 2'-deoxynucleoside 5'-phosphate N-hydrolase 1 family. As to quaternary structure, monomer and homodimer.

The catalysed reaction is a pyrimidine 2'-deoxyribonucleoside 5'-phosphate + H2O = a pyrimidine nucleobase + 2-deoxy-D-ribose 5-phosphate. It catalyses the reaction a purine 2'-deoxyribonucleoside 5'-phosphate + H2O = a purine nucleobase + 2-deoxy-D-ribose 5-phosphate. Functionally, catalyzes the cleavage of the N-glycosidic bond of deoxyribonucleoside 5'-monophosphates to yield deoxyribose 5-phosphate and a purine or pyrimidine base. In Methanosarcina mazei (strain ATCC BAA-159 / DSM 3647 / Goe1 / Go1 / JCM 11833 / OCM 88) (Methanosarcina frisia), this protein is Putative 2'-deoxynucleoside 5'-phosphate N-hydrolase 1.